The sequence spans 621 residues: Bifunctional protein GlmU (621 aa).

Positions 1–229 are pyrophosphorylase; sequence MAERDLAVAI…AREIVGINDR (229 aa). Residues 11-14, K25, Q76, and 81-82 contribute to the UDP-N-acetyl-alpha-D-glucosamine site; these read LAAG and GT. A Mg(2+)-binding site is contributed by D106. UDP-N-acetyl-alpha-D-glucosamine-binding residues include G143, E158, N173, and N227. Residue N227 participates in Mg(2+) binding. The linker stretch occupies residues 230–250; it reads RQLAQAYQILQDRLKEAWMEA. Positions 251-621 are N-acetyltransferase; that stretch reads GVTFVDPDSV…TGVGIPSCPP (371 aa). R332 and K350 together coordinate UDP-N-acetyl-alpha-D-glucosamine. H362 functions as the Proton acceptor in the catalytic mechanism. Positions 365 and 376 each coordinate UDP-N-acetyl-alpha-D-glucosamine. Residues A379, 385 to 386, A422, and R441 contribute to the acetyl-CoA site; that span reads NY. Positions 601–621 are disordered; that stretch reads ATPPSPQRADGTGVGIPSCPP.

This sequence in the N-terminal section; belongs to the N-acetylglucosamine-1-phosphate uridyltransferase family. The protein in the C-terminal section; belongs to the transferase hexapeptide repeat family. In terms of assembly, homotrimer. Requires Mg(2+) as cofactor.

It localises to the cytoplasm. It carries out the reaction alpha-D-glucosamine 1-phosphate + acetyl-CoA = N-acetyl-alpha-D-glucosamine 1-phosphate + CoA + H(+). The catalysed reaction is N-acetyl-alpha-D-glucosamine 1-phosphate + UTP + H(+) = UDP-N-acetyl-alpha-D-glucosamine + diphosphate. It participates in nucleotide-sugar biosynthesis; UDP-N-acetyl-alpha-D-glucosamine biosynthesis; N-acetyl-alpha-D-glucosamine 1-phosphate from alpha-D-glucosamine 6-phosphate (route II): step 2/2. Its pathway is nucleotide-sugar biosynthesis; UDP-N-acetyl-alpha-D-glucosamine biosynthesis; UDP-N-acetyl-alpha-D-glucosamine from N-acetyl-alpha-D-glucosamine 1-phosphate: step 1/1. The protein operates within bacterial outer membrane biogenesis; LPS lipid A biosynthesis. Catalyzes the last two sequential reactions in the de novo biosynthetic pathway for UDP-N-acetylglucosamine (UDP-GlcNAc). The C-terminal domain catalyzes the transfer of acetyl group from acetyl coenzyme A to glucosamine-1-phosphate (GlcN-1-P) to produce N-acetylglucosamine-1-phosphate (GlcNAc-1-P), which is converted into UDP-GlcNAc by the transfer of uridine 5-monophosphate (from uridine 5-triphosphate), a reaction catalyzed by the N-terminal domain. This is Bifunctional protein GlmU from Synechococcus sp. (strain JA-3-3Ab) (Cyanobacteria bacterium Yellowstone A-Prime).